Consider the following 459-residue polypeptide: ATP-binding protein Uup-like (459 aa).

An ABC transporter domain is found at 132–350; the sequence is FEMEDVSYEI…QQANFWASKA (219 aa). 164-171 contributes to the ATP binding site; it reads GPNGCGKT. Over residues 357–375 the composition is skewed to basic and acidic residues; that stretch reads AKKSEPLKEESAVKNDRTS. Residues 357–381 are disordered; that stretch reads AKKSEPLKEESAVKNDRTSKPKSVK.

This sequence belongs to the ABC transporter superfamily. ABCF family. Uup subfamily.

The protein localises to the cytoplasm. It catalyses the reaction ATP + H2O = ADP + phosphate + H(+). In terms of biological role, might play a role in ribosome assembly or function; this is missing the first ABC transporter domain compared to paralogs. The protein is ATP-binding protein Uup-like (uup-B) of Haemophilus influenzae (strain ATCC 51907 / DSM 11121 / KW20 / Rd).